The chain runs to 453 residues: Allantoinase (453 aa).

6 residues coordinate Zn(2+): histidine 59, histidine 61, lysine 146, histidine 186, histidine 242, and aspartate 315. An N6-carboxylysine modification is found at lysine 146.

Belongs to the metallo-dependent hydrolases superfamily. Allantoinase family. As to quaternary structure, homotetramer. It depends on Zn(2+) as a cofactor. Post-translationally, carboxylation allows a single lysine to coordinate two zinc ions.

It catalyses the reaction (S)-allantoin + H2O = allantoate + H(+). It functions in the pathway nitrogen metabolism; (S)-allantoin degradation; allantoate from (S)-allantoin: step 1/1. Catalyzes the conversion of allantoin (5-ureidohydantoin) to allantoic acid by hydrolytic cleavage of the five-member hydantoin ring. This chain is Allantoinase, found in Escherichia coli O9:H4 (strain HS).